Here is a 210-residue protein sequence, read N- to C-terminus: Redox-sensing transcriptional repressor Rex (210 aa).

Residues 17–56 (KYHRYLNELMKNDVDRISSKELGEKIGFTASQIRQDLNCF) constitute a DNA-binding region (H-T-H motif). 91–96 (GAGNIG) contributes to the NAD(+) binding site.

It belongs to the transcriptional regulatory Rex family. As to quaternary structure, homodimer.

The protein localises to the cytoplasm. Modulates transcription in response to changes in cellular NADH/NAD(+) redox state. In Clostridium botulinum (strain Alaska E43 / Type E3), this protein is Redox-sensing transcriptional repressor Rex.